The following is a 306-amino-acid chain: Curved DNA-binding protein (306 aa).

The J domain maps to 5–69 (DYYAIMGVKP…QRRAEYDQMW (65 aa)).

The protein resides in the cytoplasm. It is found in the nucleoid. In terms of biological role, DNA-binding protein that preferentially recognizes a curved DNA sequence. It is probably a functional analog of DnaJ; displays overlapping activities with DnaJ, but functions under different conditions, probably acting as a molecular chaperone in an adaptive response to environmental stresses other than heat shock. Lacks autonomous chaperone activity; binds native substrates and targets them for recognition by DnaK. Its activity is inhibited by the binding of CbpM. In Shigella flexneri, this protein is Curved DNA-binding protein.